The sequence spans 90 residues: Protein LURE 1.2 (90 aa).

The signal sequence occupies residues 1–19 (MKLPIIFLTLLIFVSSCTS). The N-linked (GlcNAc...) asparagine glycan is linked to asparagine 23. 3 cysteine pairs are disulfide-bonded: cysteine 58/cysteine 75, cysteine 61/cysteine 82, and cysteine 65/cysteine 84. The interval 67–87 (RRGKYIRTCSFERKLCRCSIS) is PRK6 binding.

The protein belongs to the DEFL family. Interacts with MDIS1, MIK1, MIK2 and TDR/PXY, but not with MDIS2. Binds to PRK6 LRRs. Expressed in the pistil. Detected exclusively in the synergid cells.

The protein resides in the secreted. In terms of biological role, pollen tube attractants guiding pollen tubes to the ovular micropyle. Attracts specifically pollen tubes from A.thaliana, but not those from A.lyrata. Triggers endocytosis of MDIS1 in the pollen tube tip. The sequence is that of Protein LURE 1.2 from Arabidopsis thaliana (Mouse-ear cress).